The sequence spans 1627 residues: DNA topoisomerase 2-beta (1627 aa).

ATP contacts are provided by residues Asn-117, Asn-146, 174-176 (SSN), and 187-194 (GRNGYGAK). The segment at 368–370 (KKK) is interaction with DNA. Residue 402 to 404 (QTK) coordinates ATP. In terms of domain architecture, Toprim spans 481–598 (CTLILTEGDS…SLLKHGFLEE (118 aa)). Residues Glu-487, Asp-567, and Asp-569 each contribute to the Mg(2+) site. The Topo IIA-type catalytic domain occupies 741 to 1194 (IPSLVDGLKP…SASDLWKEDL (454 aa)). Tyr-831 functions as the O-(5'-phospho-DNA)-tyrosine intermediate in the catalytic mechanism. Residues 1016 to 1025 (KLQTSLTCNS) are interaction with DNA. Disordered stretches follow at residues 1115-1144 (AWKE…GSTS), 1224-1248 (KVGK…RRIV), 1283-1365 (EFGG…DSLL), and 1378-1627 (DFSK…DMFN). Low complexity predominate over residues 1131–1144 (NANDDASSASGSTS). Polar residues predominate over residues 1296–1305 (TVNTAASGTK). Residues 1339-1349 (PWSDDESKSES) are compositionally biased toward basic and acidic residues. Acidic residues-rich tracts occupy residues 1381–1392 (KEEDDAHDDDDA) and 1412–1428 (REDE…DEYD). Composition is skewed to basic and acidic residues over residues 1436–1448 (PSPE…KKNQ) and 1462–1471 (KTDDDTTKLD). 2 stretches are compositionally biased toward basic residues: residues 1542-1552 (GKGRGAKKRKT) and 1566-1578 (KAPK…KSKK). Residues 1616–1627 (ESDEDDDFDMFN) are compositionally biased toward acidic residues.

Belongs to the type II topoisomerase family. In terms of assembly, homodimer. The cofactor is Mg(2+). Mn(2+) serves as cofactor. It depends on Ca(2+) as a cofactor.

It localises to the nucleus. It is found in the nucleolus. Its subcellular location is the nucleoplasm. It catalyses the reaction ATP-dependent breakage, passage and rejoining of double-stranded DNA.. Functionally, key decatenating enzyme that alters DNA topology by binding to two double-stranded DNA molecules, generating a double-stranded break in one of the strands, passing the intact strand through the broken strand, and religating the broken strand. Plays a role in B-cell differentiation. This chain is DNA topoisomerase 2-beta (TOP2B), found in Gallus gallus (Chicken).